Reading from the N-terminus, the 201-residue chain is Peptidyl-tRNA hydrolase (201 aa).

Tyr-14 provides a ligand contact to tRNA. The active-site Proton acceptor is the His-19. Residues Phe-64, Asn-66, and Asn-112 each contribute to the tRNA site.

It belongs to the PTH family. As to quaternary structure, monomer.

Its subcellular location is the cytoplasm. It carries out the reaction an N-acyl-L-alpha-aminoacyl-tRNA + H2O = an N-acyl-L-amino acid + a tRNA + H(+). In terms of biological role, hydrolyzes ribosome-free peptidyl-tRNAs (with 1 or more amino acids incorporated), which drop off the ribosome during protein synthesis, or as a result of ribosome stalling. Functionally, catalyzes the release of premature peptidyl moieties from peptidyl-tRNA molecules trapped in stalled 50S ribosomal subunits, and thus maintains levels of free tRNAs and 50S ribosomes. This is Peptidyl-tRNA hydrolase from Rhodopseudomonas palustris (strain BisA53).